A 435-amino-acid chain; its full sequence is 3-phosphoshikimate 1-carboxyvinyltransferase (435 aa).

3-phosphoshikimate is bound by residues Lys-22, Ser-23, and Arg-27. Lys-22 is a phosphoenolpyruvate binding site. Residues Gly-95 and Arg-123 each contribute to the phosphoenolpyruvate site. Residues Ser-168, Gln-170, Asp-319, and Lys-346 each coordinate 3-phosphoshikimate. Gln-170 is a phosphoenolpyruvate binding site. The active-site Proton acceptor is the Asp-319. Arg-350 and Arg-393 together coordinate phosphoenolpyruvate.

It belongs to the EPSP synthase family. As to quaternary structure, monomer.

The protein localises to the cytoplasm. It carries out the reaction 3-phosphoshikimate + phosphoenolpyruvate = 5-O-(1-carboxyvinyl)-3-phosphoshikimate + phosphate. The protein operates within metabolic intermediate biosynthesis; chorismate biosynthesis; chorismate from D-erythrose 4-phosphate and phosphoenolpyruvate: step 6/7. Catalyzes the transfer of the enolpyruvyl moiety of phosphoenolpyruvate (PEP) to the 5-hydroxyl of shikimate-3-phosphate (S3P) to produce enolpyruvyl shikimate-3-phosphate and inorganic phosphate. In Chloroflexus aurantiacus (strain ATCC 29364 / DSM 637 / Y-400-fl), this protein is 3-phosphoshikimate 1-carboxyvinyltransferase.